The primary structure comprises 150 residues: UPF0208 membrane protein VIBHAR_02941 (150 aa).

The next 2 membrane-spanning stretches (helical) occupy residues phenylalanine 42–asparagine 62 and alanine 70–serine 90.

It belongs to the UPF0208 family.

It is found in the cell inner membrane. In Vibrio campbellii (strain ATCC BAA-1116), this protein is UPF0208 membrane protein VIBHAR_02941.